The primary structure comprises 46 residues: Large ribosomal subunit protein bL34c (46 aa).

The disordered stretch occupies residues 1–46 (MSKRTLEGSHRKKVRKSGFLSRSQSPTGRRILKARRKKGRKMLVKY). Residues 30-46 (RILKARRKKGRKMLVKY) show a composition bias toward basic residues.

This sequence belongs to the bacterial ribosomal protein bL34 family.

It is found in the plastid. The protein resides in the cyanelle. The polypeptide is Large ribosomal subunit protein bL34c (rpl34) (Cyanophora paradoxa).